We begin with the raw amino-acid sequence, 666 residues long: Protein-arginine deiminase type-4 (666 aa).

Positions 153, 155, 165, 168, 176, and 179 each coordinate Ca(2+). Citrulline occurs at positions 212 and 218. Gln-349 is a Ca(2+) binding site. Asp-350 is a catalytic residue. Residues Glu-351, Glu-353, Asp-369, and Ser-370 each coordinate Ca(2+). Arg-372, Arg-374, and Arg-383 each carry citrulline. Position 374 (Arg-374) interacts with substrate. Residues Phe-407, Leu-410, and Glu-411 each coordinate Ca(2+). Catalysis depends on residues His-471, Asp-473, and Cys-648.

It belongs to the protein arginine deiminase family. The cofactor is Ca(2+). In terms of processing, autocitrullination at Arg-372 and Arg-374 inactivates the enzyme. As to expression, expressed in pluripotent embryonic stem and induced pluripotent stem cells but not multipotent neural stem cells.

The protein resides in the cytoplasm. Its subcellular location is the nucleus. It is found in the cytoplasmic granule. The enzyme catalyses L-arginyl-[protein] + H2O = L-citrullyl-[protein] + NH4(+). Strongly Inhibited by F-amidine and N-alpha-benzoyl-N5-(2-chloro-1-iminoethyl)-L-ornithine amide (Cl-amidine). These inhibitors are however not specific to PADI4 and also inhibit other members of the family. In terms of biological role, catalyzes the citrullination/deimination of arginine residues of proteins such as histones, thereby playing a key role in histone code and regulation of stem cell maintenance. Citrullinates histone H1 at 'Arg-54' (to form H1R54ci), histone H3 at 'Arg-2', 'Arg-8', 'Arg-17' and/or 'Arg-26' (to form H3R2ci, H3R8ci, H3R17ci, H3R26ci, respectively) and histone H4 at 'Arg-3' (to form H4R3ci). Acts as a key regulator of stem cell maintenance by mediating citrullination of histone H1: citrullination of 'Arg-54' of histone H1 (H1R54ci) results in H1 displacement from chromatin and global chromatin decondensation, thereby promoting pluripotency and stem cell maintenance. Promotes profound chromatin decondensation during the innate immune response to infection in neutrophils by mediating formation of H1R54ci. Required for the formation of neutrophil extracellular traps (NETs); NETs are mainly composed of DNA fibers and are released by neutrophils to bind pathogens during inflammation. Citrullination of histone H3 prevents their methylation by CARM1 and HRMT1L2/PRMT1 and represses transcription. Citrullinates EP300/P300 at 'Arg-2142', which favors its interaction with NCOA2/GRIP1. In Mus musculus (Mouse), this protein is Protein-arginine deiminase type-4 (Padi4).